The following is a 514-amino-acid chain: Peptide chain release factor 3 (514 aa).

Positions 8 to 268 (KKRRTFAIIS…SFLAFAPEPH (261 aa)) constitute a tr-type G domain. GTP is bound by residues 17–24 (SHPDAGKT), 85–89 (DTPGH), and 139–142 (NKLD).

The protein belongs to the TRAFAC class translation factor GTPase superfamily. Classic translation factor GTPase family. PrfC subfamily.

It is found in the cytoplasm. In terms of biological role, increases the formation of ribosomal termination complexes and stimulates activities of RF-1 and RF-2. It binds guanine nucleotides and has strong preference for UGA stop codons. It may interact directly with the ribosome. The stimulation of RF-1 and RF-2 is significantly reduced by GTP and GDP, but not by GMP. This Streptococcus mutans serotype c (strain ATCC 700610 / UA159) protein is Peptide chain release factor 3.